Here is an 89-residue protein sequence, read N- to C-terminus: MANHKSAEKRIRQTIKRTERNRFYKTKVKNIIKAVREAVAVNDVAKAQERLKIANKELHKFVSKGILKKNTASRKVSRLNASVKKIALA.

Belongs to the bacterial ribosomal protein bS20 family.

Functionally, binds directly to 16S ribosomal RNA. This chain is Small ribosomal subunit protein bS20, found in Helicobacter pylori (strain Shi470).